A 502-amino-acid polypeptide reads, in one-letter code: Maturase K (502 aa).

The protein belongs to the intron maturase 2 family. MatK subfamily.

It localises to the plastid. The protein resides in the chloroplast. In terms of biological role, usually encoded in the trnK tRNA gene intron. Probably assists in splicing its own and other chloroplast group II introns. This is Maturase K from Arabis blepharophylla (Coast rock-cress).